A 252-amino-acid polypeptide reads, in one-letter code: Ubiquinone biosynthesis O-methyltransferase (252 aa).

The S-adenosyl-L-methionine site is built by R51, G70, D91, and M136.

It belongs to the methyltransferase superfamily. UbiG/COQ3 family.

It catalyses the reaction a 3-demethylubiquinol + S-adenosyl-L-methionine = a ubiquinol + S-adenosyl-L-homocysteine + H(+). It carries out the reaction a 3-(all-trans-polyprenyl)benzene-1,2-diol + S-adenosyl-L-methionine = a 2-methoxy-6-(all-trans-polyprenyl)phenol + S-adenosyl-L-homocysteine + H(+). It participates in cofactor biosynthesis; ubiquinone biosynthesis. In terms of biological role, O-methyltransferase that catalyzes the 2 O-methylation steps in the ubiquinone biosynthetic pathway. This chain is Ubiquinone biosynthesis O-methyltransferase, found in Albidiferax ferrireducens (strain ATCC BAA-621 / DSM 15236 / T118) (Rhodoferax ferrireducens).